Reading from the N-terminus, the 579-residue chain is Methionine--tRNA ligase (579 aa).

Residues 14–24 carry the 'HIGH' region motif; it reads PYINGVKHLGN. The Zn(2+) site is built by cysteine 146, cysteine 149, cysteine 159, and cysteine 162. The short motif at 346-350 is the 'KMSKS' region element; the sequence is KFSTS. An ATP-binding site is contributed by threonine 349.

The protein belongs to the class-I aminoacyl-tRNA synthetase family. MetG type 1 subfamily. As to quaternary structure, monomer. It depends on Zn(2+) as a cofactor.

The protein resides in the cytoplasm. It catalyses the reaction tRNA(Met) + L-methionine + ATP = L-methionyl-tRNA(Met) + AMP + diphosphate. Functionally, is required not only for elongation of protein synthesis but also for the initiation of all mRNA translation through initiator tRNA(fMet) aminoacylation. This chain is Methionine--tRNA ligase, found in Hyphomonas neptunium (strain ATCC 15444).